Consider the following 472-residue polypeptide: Glutamine synthetase (472 aa).

The region spanning 17–101 (NNVKFVLLRF…IRCSVYEPTT (85 aa)) is the GS beta-grasp domain. The region spanning 109 to 472 (PRSIAIRAEN…HPVEFEMYYA (364 aa)) is the GS catalytic domain. 2 residues coordinate Mg(2+): Glu-134 and Glu-136. Glu-212 is an ATP binding site. Mg(2+) is bound by residues Glu-217 and Glu-225. L-glutamate is bound by residues 269–270 (NG) and Gly-270. His-274 serves as a coordination point for Mg(2+). Residues 276–278 (NMS) and Ser-278 each bind ATP. The L-glutamate site is built by Arg-326, Glu-332, and Arg-344. ATP is bound by residues Arg-344, Arg-349, and Lys-357. Glu-362 is a Mg(2+) binding site. Arg-364 provides a ligand contact to L-glutamate. Tyr-402 carries the post-translational modification O-AMP-tyrosine.

The protein belongs to the glutamine synthetase family. As to quaternary structure, oligomer of 12 subunits arranged in the form of two hexameric ring. Mg(2+) serves as cofactor.

It is found in the cytoplasm. The enzyme catalyses L-glutamate + NH4(+) + ATP = L-glutamine + ADP + phosphate + H(+). Its activity is regulated as follows. The activity of this enzyme could be controlled by adenylation under conditions of abundant glutamine. Its function is as follows. Catalyzes the ATP-dependent biosynthesis of glutamine from glutamate and ammonia. This Haemophilus influenzae (strain ATCC 51907 / DSM 11121 / KW20 / Rd) protein is Glutamine synthetase.